The chain runs to 413 residues: MAPPSVFAQVPQAPPVLVFKLTADFRDDPDPRKVNLGVGAYRTDESQPWVLPVVRKVEQKIANDNSLNHEYLPILGLAEFRSCASRLVLGDNSLAIRENRVGGVQSLGGTGALRIGADFLGRWYNGTDNKNTPIYVSSPTWENHNAVFSAAGFKDIRPYCYWDAEKRGLDLQGFLNDLENAPEFSIFVLHACAHNPTGTDPTPEQWKQIAAVMQRRFLFPFFDSAYQGFASGDLEKDAWAIRYFVSEGFELFCAQSFSKNFGLYNERVGNLTVVGKESDSVLRVLSQMEKIVRITWSNPPAQGARIVAATLSDPELFKEWKGNVKTMADRILTMRSELRARLEALKTPGTWSHITEQIGMFSFTGLNPKQVEYLVNEKHIYLLPSGRINMCGLTTKNLDYVATSIHEAVTKIQ.

2 residues coordinate L-aspartate: glycine 39 and tryptophan 141. Position 149 is a phosphoserine (serine 149). Asparagine 195 lines the L-aspartate pocket. At lysine 259 the chain carries N6-(pyridoxal phosphate)lysine. Lysine 318 is modified (N6-succinyllysine). Residue arginine 387 participates in L-aspartate binding.

Belongs to the class-I pyridoxal-phosphate-dependent aminotransferase family. In terms of assembly, homodimer. The cofactor is pyridoxal 5'-phosphate. Expressed in neurons of the retina. Localizes to the inner and outer plexiform layers, the inner and outer nuclear layer and the outer segments of photoreceptors.

It localises to the cytoplasm. The catalysed reaction is L-aspartate + 2-oxoglutarate = oxaloacetate + L-glutamate. It catalyses the reaction L-cysteine + 2-oxoglutarate = 2-oxo-3-sulfanylpropanoate + L-glutamate. The enzyme catalyses (2S)-2-aminobutanoate + 2-oxoglutarate = 2-oxobutanoate + L-glutamate. It carries out the reaction 3-sulfino-L-alanine + 2-oxoglutarate = 3-sulfinopyruvate + L-glutamate. Inhibited by calcium ions. Functionally, biosynthesis of L-glutamate from L-aspartate or L-cysteine. Important regulator of levels of glutamate, the major excitatory neurotransmitter of the vertebrate central nervous system. Acts as a scavenger of glutamate in brain neuroprotection. The aspartate aminotransferase activity is involved in hepatic glucose synthesis during development and in adipocyte glyceroneogenesis. Using L-cysteine as substrate, regulates levels of mercaptopyruvate, an important source of hydrogen sulfide. Mercaptopyruvate is converted into H(2)S via the action of 3-mercaptopyruvate sulfurtransferase (3MST). Hydrogen sulfide is an important synaptic modulator and neuroprotectant in the brain. The sequence is that of Aspartate aminotransferase, cytoplasmic from Mus musculus (Mouse).